The primary structure comprises 365 residues: Galactoside alpha-(1,2)-fucosyltransferase 1 (365 aa).

The Cytoplasmic segment spans residues 1-8 (MWPLSHRH). A helical; Signal-anchor for type II membrane protein transmembrane segment spans residues 9 to 25 (LCLAFLLVCVLSAISFF). Residues 26–365 (LHIYQDSIRH…LSSLWTLAEP (340 aa)) are Lumenal-facing. N-linked (GlcNAc...) asparagine glycosylation is found at asparagine 65, asparagine 301, and asparagine 327.

This sequence belongs to the glycosyltransferase 11 family.

Its subcellular location is the golgi apparatus. The protein localises to the golgi stack membrane. The enzyme catalyses a beta-D-galactosyl-(1-&gt;4)-N-acetyl-beta-D-glucosaminyl derivative + GDP-beta-L-fucose = an alpha-L-Fuc-(1-&gt;2)-beta-D-Gal-(1-&gt;4)-beta-D-GlcNAc derivative + GDP + H(+). It catalyses the reaction a ganglioside GA1 + GDP-beta-L-fucose = a ganglioside Fuc-GA1 + GDP + H(+). The catalysed reaction is a beta-D-Gal-(1-&gt;3)-beta-D-GlcNAc-(1-&gt;3)-beta-D-Gal-(1-&gt;4)-beta-D-Glc-(1&lt;-&gt;1')-Cer(d18:1(4E)) + GDP-beta-L-fucose = alpha-L-fucosyl-(1-&gt;2)- beta-D-galactosyl-(1-&gt;3)-N-acetyl-beta-D-glucosaminyl-(1-&gt;3)-beta-D-galactosyl-(1-&gt;4)-beta-D-glucosyl-(1&lt;-&gt;1')-N-acylsphing-4-enine + GDP + H(+). It carries out the reaction a neolactoside nLc4Cer(d18:1(4E)) + GDP-beta-L-fucose = a neolactoside IV(2)-alpha-Fuc-nLc4Cer(d18:1(4E)) + GDP + H(+). The enzyme catalyses a ganglioside GM1 + GDP-beta-L-fucose = a ganglioside Fuc-GM1 + GDP + H(+). It catalyses the reaction beta-D-galactosyl-(1-&gt;3)-N-acetyl-D-galactosamine + GDP-beta-L-fucose = alpha-L-fucosyl-(1-&gt;2)-beta-D-galactosyl-(1-&gt;3)-N-acetyl-D-galactosamine + GDP + H(+). Its pathway is protein modification; protein glycosylation. Catalyzes the transfer of L-fucose, from a guanosine diphosphate-beta-L-fucose, to the terminal galactose residue of glycoconjugates through an alpha(1,2) linkage leading to H antigen synthesis that is an intermediate substrate in the synthesis of ABO blood group antigens. H antigen is essential for maturation of the glomerular layer of the main olfactory bulb, in cell migration and early cell-cell contacts during tumor associated angiogenesis. Preferentially fucosylates soluble lactose and to a lesser extent fucosylates glycolipids gangliosides GA1 and GM1a. The protein is Galactoside alpha-(1,2)-fucosyltransferase 1 of Leontocebus fuscicollis (Brown-mantled tamarin).